A 238-amino-acid polypeptide reads, in one-letter code: Succinate dehydrogenase iron-sulfur subunit (238 aa).

One can recognise a 2Fe-2S ferredoxin-type domain in the interval 8-97; that stretch reads YRYNPDVDDA…KIVIRPLPGL (90 aa). [2Fe-2S] cluster-binding residues include cysteine 55, cysteine 60, and cysteine 75. A 4Fe-4S ferredoxin-type domain is found at 139 to 169; the sequence is QREKLDGLYECILCACCSTSCPSFWWNPDKF. The [4Fe-4S] cluster site is built by cysteine 149, cysteine 152, and cysteine 155. Residue cysteine 159 participates in [3Fe-4S] cluster binding. Tryptophan 164 contributes to the a ubiquinone binding site. Residues cysteine 206 and cysteine 212 each coordinate [3Fe-4S] cluster. Residue cysteine 216 participates in [4Fe-4S] cluster binding.

The protein belongs to the succinate dehydrogenase/fumarate reductase iron-sulfur protein family. In terms of assembly, part of an enzyme complex containing four subunits: a flavoprotein, an iron-sulfur, cytochrome b-556, and a hydrophobic anchor protein. The complex forms trimers. [2Fe-2S] cluster serves as cofactor. Requires [3Fe-4S] cluster as cofactor. It depends on [4Fe-4S] cluster as a cofactor.

The protein localises to the cell inner membrane. The enzyme catalyses a quinone + succinate = fumarate + a quinol. It functions in the pathway carbohydrate metabolism; tricarboxylic acid cycle; fumarate from succinate (bacterial route): step 1/1. Two distinct, membrane-bound, FAD-containing enzymes are responsible for the catalysis of fumarate and succinate interconversion; the fumarate reductase is used in anaerobic growth, and the succinate dehydrogenase is used in aerobic growth. This Escherichia coli (strain K12) protein is Succinate dehydrogenase iron-sulfur subunit (sdhB).